Reading from the N-terminus, the 344-residue chain is Follistatin (344 aa).

An N-terminal signal peptide occupies residues 1 to 29 (MVCARHQPGGLCLLLLLLCQFMEDRSAQA). One can recognise a TB domain in the interval 30 to 103 (GNCWLRQAKN…TCENVDCGPG (74 aa)). 18 cysteine pairs are disulfide-bonded: cysteine 32–cysteine 55, cysteine 42–cysteine 88, cysteine 56–cysteine 91, cysteine 95–cysteine 106, cysteine 100–cysteine 116, cysteine 118–cysteine 150, cysteine 122–cysteine 143, cysteine 132–cysteine 164, cysteine 168–cysteine 179, cysteine 173–cysteine 189, cysteine 192–cysteine 225, cysteine 196–cysteine 218, cysteine 207–cysteine 239, cysteine 245–cysteine 256, cysteine 250–cysteine 267, cysteine 270–cysteine 302, cysteine 274–cysteine 295, and cysteine 284–cysteine 316. Residues 94 to 117 (TCENVDCGPGKKCRMNKKNKPRCV) enclose the Follistatin-like 1 domain. A Kazal-like 1 domain is found at 112-166 (NKPRCVCAPDCSNITWKGPVCGLDGKTYRNECALLKARCKEQPELEVQYQGKCKK). An N-linked (GlcNAc...) asparagine glycan is attached at asparagine 124. A Follistatin-like 2 domain is found at 167–190 (TCRDVFCPGSSTCVVDQTNNAYCV). Residues 186–241 (NAYCVTCNRICPEPSSSEQYLCGNDGVTYSSACHLRKATCLLGRSIGLAYEGKCIK) enclose the Kazal-like 2 domain. The Follistatin-like 3 domain occupies 244-268 (SCEDIQCGGGKKCLWDSKVGRGRCS). One can recognise a Kazal-like 3 domain in the interval 264–318 (RGRCSLCDELCPDSKSDEPVCASDNATYASECAMKEAACSSGVLLEVKHSGSCNS). Asparagine 288 carries an N-linked (GlcNAc...) asparagine glycan. The disordered stretch occupies residues 315-344 (SCNSISEETEEEEEEEDQDYSFPISSILEW). Positions 321-333 (EETEEEEEEEDQD) are enriched in acidic residues.

As to quaternary structure, interacts with GDF11. Interacts with activin A/INHBA. Interacts with myostatin/MSTN.

It localises to the secreted. The protein localises to the nucleus. It is found in the nucleolus. Multifunctional regulatory protein whose primary function is to antagonize members of the transforming growth factor beta (TGF-beta) superfamily including activin, myostatin, GDF11 or bone morphogenetic proteins (BMPs). Mechanistically, binds to these ligands in the extracellular space, blocking their type II receptor-binding site to inhibit downstream signaling. Plays an essential role in muscle fiber formation and growth both by preventing the repressive effects of myostatin and through SMAD3/AKT/mTOR signaling independently of myostatin. Also promotes neural differentiation by antagonizing the action BMP4. Acts as a specific inhibitor of the biosynthesis and secretion of pituitary follicle stimulating hormone (FSH) by sequestering activin A/INHBA. On the other hand, translocates into the nucleus where it down-regulates rRNA synthesis and ribosome biogenesis to maintain cellular energy homeostasis by binding to rDNA. The sequence is that of Follistatin from Mus musculus (Mouse).